The primary structure comprises 206 residues: Thymidylate kinase (206 aa).

10–17 (GVDGVGKT) provides a ligand contact to ATP.

Belongs to the thymidylate kinase family.

It carries out the reaction dTMP + ATP = dTDP + ADP. Functionally, phosphorylation of dTMP to form dTDP in both de novo and salvage pathways of dTTP synthesis. The chain is Thymidylate kinase from Bifidobacterium longum (strain DJO10A).